The chain runs to 206 residues: MLSFSRVVNCSRTCSRFLGLSLGTASLCAAGANIALLFPNWDVTYLMRGLIGKHAMLGSGLWGGGLMVLLAATLISMTGSFSKSAPCLQVLIALLSSGLALLGAVICFVTSGVALKDGPFCMFDVSSFNQTQAWKFGYPFKDLHNRNYLYDRSLWTSVCLEPSKAVVWHVAFFSILLCISLLQLLLVAIHLVNSILGLFCSFCEKH.

At 1-16 (MLSFSRVVNCSRTCSR) the chain is on the cytoplasmic side. Residues 17–37 (FLGLSLGTASLCAAGANIALL) form a helical membrane-spanning segment. At 38–54 (FPNWDVTYLMRGLIGKH) the chain is on the extracellular side. Residues 55-75 (AMLGSGLWGGGLMVLLAATLI) form a helical membrane-spanning segment. Residues 76–89 (SMTGSFSKSAPCLQ) are Cytoplasmic-facing. A helical transmembrane segment spans residues 90-110 (VLIALLSSGLALLGAVICFVT). Topologically, residues 111-171 (SGVALKDGPF…PSKAVVWHVA (61 aa)) are extracellular. Asn129 carries N-linked (GlcNAc...) asparagine glycosylation. A helical membrane pass occupies residues 172-192 (FFSILLCISLLQLLLVAIHLV). Positions 182–192 (LQLLLVAIHLV) are important for homodimerization. Residues 193–206 (NSILGLFCSFCEKH) lie on the Cytoplasmic side of the membrane.

The protein belongs to the L6 tetraspanin family. May form homodimers and homooligomers. Interacts with integrins ITGAV and ITGB3. Interacts with components of members of the V0 complex of vacuolar(H+)-ATPase (V-ATPase), including ATP6V0B and ATP6V0D2; this interaction inhibits V1-V0 complex assembly. Predominantly expressed in osteoclasts (at protein level). Also expressed in white adipose tissue, as well as in bone marrow-derived macrophages.

It localises to the lysosome membrane. The protein localises to the cytoplasm. It is found in the cytoskeleton. The protein resides in the cell projection. Its subcellular location is the filopodium. Its function is as follows. Negatively regulates vacuolar (H+)-ATPase (V-ATPase) activity by interacting with members of V-ATPase V0 complex and hence inhibiting V1-V0 assembly. Required for multinucleation during osteoclast differentiation. This is Transmembrane 4 L6 family member 19 (Tm4sf19) from Mus musculus (Mouse).